Consider the following 80-residue polypeptide: UPF0291 protein LACR_1198 (80 aa).

The protein belongs to the UPF0291 family.

It is found in the cytoplasm. This is UPF0291 protein LACR_1198 from Lactococcus lactis subsp. cremoris (strain SK11).